The chain runs to 535 residues: Growth-regulating factor 2 (535 aa).

Residues 164 to 199 (PFTLTQWAELEQQALIYKYITANVPVPSSLLISIKK) form the QLQ domain. In terms of domain architecture, WRC spans 227–271 (DPEPGRCRRTDGKKWRCSRDAVPDQKYCERHINRGRHRSRKPVEV). 2 consecutive short sequence motifs (bipartite nuclear localization signal) follow at residues 232-242 (RCRRTDGKKWR) and 260-267 (RGRHRSRK). Disordered stretches follow at residues 260 to 308 (RGRH…ASSN), 417 to 437 (PIASSSPSSTHNNNNAQEKTT), and 514 to 535 (SSVSSPIAENNRHNGDYFHYTT). Residues 272–291 (QSGQNQTAAAASKAVTTPQQ) are compositionally biased toward polar residues. The span at 299 to 308 (NRSNARASSN) shows a compositional bias: low complexity. Over residues 426–437 (THNNNNAQEKTT) the composition is skewed to polar residues.

The protein belongs to the GRF family. Interacts with GIF1. Strongly expressed in actively growing and developing tissues, such as roots, upper stems, and shoot tips containing the shoot apical meristem (SAM) and flower buds. Detected in young leaf primordium. Also expressed in mature flowers, but weakly expressed in mature stems and leaves.

It localises to the nucleus. Its function is as follows. Transcription activator that plays a role in the regulation of cell expansion in leaf and cotyledons tissues. Component of a network formed by miR396, the GRFs and their interacting factors (GIFs) acting in the regulation of meristem function, at least partially through the control of cell proliferation. The protein is Growth-regulating factor 2 (GRF2) of Arabidopsis thaliana (Mouse-ear cress).